Consider the following 216-residue polypeptide: Transmembrane protein 125 (216 aa).

4 consecutive transmembrane segments (helical) span residues 32–52 (LLCF…GVAL), 65–85 (LAVG…QLMS), 111–131 (AVVV…LAGL), and 144–164 (MLSV…GLLL).

The protein resides in the membrane. The protein is Transmembrane protein 125 (Tmem125) of Mus musculus (Mouse).